Consider the following 98-residue polypeptide: Cystatin-B (98 aa).

M1 is modified (N-acetylmethionine). Positions 46-50 (QVVAG) match the Secondary area of contact motif.

Belongs to the cystatin family. Able to form dimers stabilized by noncovalent forces.

It localises to the cytoplasm. The protein localises to the nucleus. Functionally, this is an intracellular thiol proteinase inhibitor. Tightly binding reversible inhibitor of cathepsins L, H and B. This chain is Cystatin-B (CSTB), found in Macaca fuscata fuscata (Japanese macaque).